Reading from the N-terminus, the 286-residue chain is Aminoglycoside N(3)-acetyltransferase III (286 aa).

This sequence belongs to the antibiotic N-acetyltransferase family.

The enzyme catalyses a 2-deoxystreptamine antibiotic + acetyl-CoA = an N(3)-acetyl-2-deoxystreptamine antibiotic + CoA + H(+). Functionally, resistance to antibiotics containing the 2-deoxy-streptamine ring including gentamicin, kanamycin, tobramycin, neomycin and apramycin. The chain is Aminoglycoside N(3)-acetyltransferase III (aacC3) from Salmonella sp.